Reading from the N-terminus, the 89-residue chain is Large ribosomal subunit protein bL27 (89 aa).

The tract at residues 1–20 (MAHKKAGGSSRNGRDSAGRR) is disordered.

The protein belongs to the bacterial ribosomal protein bL27 family.

The chain is Large ribosomal subunit protein bL27 from Jannaschia sp. (strain CCS1).